The sequence spans 130 residues: Small ribosomal subunit protein uS9 (130 aa).

It belongs to the universal ribosomal protein uS9 family.

In Polaromonas sp. (strain JS666 / ATCC BAA-500), this protein is Small ribosomal subunit protein uS9.